Consider the following 427-residue polypeptide: Trigger factor (427 aa).

A PPIase FKBP-type domain is found at 163–248 (GDTVVIDFVG…VHEVKAKEVP (86 aa)).

The protein belongs to the FKBP-type PPIase family. Tig subfamily.

The protein localises to the cytoplasm. The enzyme catalyses [protein]-peptidylproline (omega=180) = [protein]-peptidylproline (omega=0). In terms of biological role, involved in protein export. Acts as a chaperone by maintaining the newly synthesized protein in an open conformation. Functions as a peptidyl-prolyl cis-trans isomerase. The polypeptide is Trigger factor (Streptococcus equi subsp. equi (strain 4047)).